The sequence spans 640 residues: MDKKYYQLLKNQFSSKEAVLTEIINLSAICELPKATEHFMSDVHGEYDAFNHVLRNGSGSIKEKLRDCFPEFSATEISSLATLIYYPQEKLDSECQLKETEEFENYCRINLVYLLKTVKFVGQKYTRSKVRKAFPEKFRYILEELINEVDSTTDKRDYFDSILSQLQNLGEFTRLIVALADTIRRLTVDHLHVVGDIYDRGPYPDKIIDRLIKMPSVDVQWGNHDIVWMAAFSGSPLAMMNVIRICARYGNLDILEESYGINLRMILEYAERYYEPSEAFQPRLVEGVRLSDDEKALLNKLQEATAILQFKLESQLIKRRPDFQLEHRDVLHFIDFSEKTIKLGTEVYELTDFQAPTVNPEQPESLTAEEEKIISHLLNNFRSSDKLKRHVEFLQEKGAMYLSYNGNLLIHGCLPLHENGDFKSFTVNKEAHAGRDLLDFFDQEVRKCLAHPENSTDLATDLMWYLWVGECSSLFGKTAMTTFERYYIKDKKTHVEKKNPYYQLREEAEIIRKILENFGLDEGGHLVNGHTPIKEKNGENPIKADGKLIVIDGGFAKAYQKETGIAGYTILYNSFGIQLVAHQPFSTVKEAVEKGTDIISLKCLVAEVDQRKRVKDTNVGQTLLSEIADLEVLFEHYEEF.

The protein belongs to the FBPase class 3 family. The cofactor is Mn(2+).

It catalyses the reaction beta-D-fructose 1,6-bisphosphate + H2O = beta-D-fructose 6-phosphate + phosphate. It participates in carbohydrate biosynthesis; gluconeogenesis. In Lactococcus lactis subsp. lactis (strain IL1403) (Streptococcus lactis), this protein is Fructose-1,6-bisphosphatase class 3.